A 301-amino-acid chain; its full sequence is Isonocardicin synthase (301 aa).

Monomer.

It catalyses the reaction nocardicin G + S-adenosyl-L-methionine = isonocardicin C + S-methyl-5'-thioadenosine + H(+). The catalysed reaction is nocardicin E + S-adenosyl-L-methionine = isonocardicin A + S-methyl-5'-thioadenosine + H(+). Its pathway is antibiotic biosynthesis. Involved in the biosynthesis of the beta-lactam antibiotic nocardicin A. In the presence of S-adenosyl-L-methionine (AdoMet), catalyzes the transfer of a 3-amino-3-carboxypropyl group from AdoMet to nocardicin G, forming isonocardicin C. Can also catalyze the transformation of nocardicin E and F to isonocardicin A and B, respectively, but in vivo substrate is probably nocardicin G. This chain is Isonocardicin synthase, found in Nocardia uniformis subsp. tsuyamanensis.